A 697-amino-acid chain; its full sequence is Pentatricopeptide repeat-containing protein At2g13600 (697 aa).

PPR repeat units follow at residues 18–53 (DSSPFAKLLDSCIKSKLSAIYVRYVHASVIKSGFSN), 54–84 (EIFIQNRLIDAYSKCGSLEDGRQVFDKMPQR), 85–115 (NIYTWNSVVTGLTKLGFLDEADSLFRSMPER), 116–150 (DQCTWNSMVSGFAQHDRCEEALCYFAMMHKEGFVL), 151–185 (NEYSFASVLSACSGLNDMNKGVQVHSLIAKSPFLS), 186–216 (DVYIGSALVDMYSKCGNVNDAQRVFDEMGDR), 217–251 (NVVSWNSLITCFEQNGPAVEALDVFQMMLESRVEP), 252–282 (DEVTLASVISACASLSAIKVGQEVHGRVVKN), 288–322 (DIILSNAFVDMYAKCSRIKEARFIFDSMPIRNVIA), 324–349 (TSMISGYAMAASTKAARLMFTKMAER), 350–384 (NVVSWNALIAGYTQNGENEEALSLFCLLKRESVCP), 385–419 (THYSFANILKACADLAELHLGMQAHVHVLKHGFKF), 426–456 (DIFVGNSLIDMYVKCGCVEEGYLVFRKMMER), 457–491 (DCVSWNAMIIGFAQNGYGNEALELFREMLESGEKP), 492–527 (DHITMIGVLSACGHAGFVEEGRHYFSSMTRDFGVAP), and 528–558 (LRDHYTCMVDLLGRAGFLEEAKSMIEEMPMQ). The tract at residues 563–638 (IWGSLLAACK…QPGCSWIKIQ (76 aa)) is type E motif. Residues 639–669 (GHDHVFMVKDKSHPRKKQIHSLLDILIAEMR) are type E(+) motif.

This sequence belongs to the PPR family. PCMP-E subfamily.

In Arabidopsis thaliana (Mouse-ear cress), this protein is Pentatricopeptide repeat-containing protein At2g13600 (PCMP-E76).